The following is a 432-amino-acid chain: Phytase AppA (432 aa).

Positions 1 to 22 are cleaved as a signal peptide; it reads MKAILIPFLSLLIPLTPQSAFA. Arginine 38 contributes to the 1D-myo-inositol hexakisphosphate binding site. Histidine 39 acts as the Nucleophile in catalysis. 1D-myo-inositol hexakisphosphate is bound by residues 42–46 and arginine 114; that span reads RAPTK. Cystine bridges form between cysteine 99–cysteine 130, cysteine 155–cysteine 430, cysteine 200–cysteine 210, and cysteine 404–cysteine 413. 1D-myo-inositol hexakisphosphate-binding positions include arginine 289 and 325–327; that span reads HDT. The active-site Proton donor is the aspartate 326.

Belongs to the histidine acid phosphatase family. As to quaternary structure, monomer.

The protein resides in the periplasm. It catalyses the reaction 1D-myo-inositol hexakisphosphate + H2O = 1D-myo-inositol 1,2,3,4,5-pentakisphosphate + phosphate. It carries out the reaction 1D-myo-inositol 1,2,3,4,5-pentakisphosphate + H2O = 1D-myo-inositol 2,3,4,5-tetrakisphosphate + phosphate. The catalysed reaction is 1D-myo-inositol 2,3,4,5-tetrakisphosphate + H2O = 1D-myo-inositol 2,4,5-triphosphate + phosphate. The enzyme catalyses 1D-myo-inositol 2,4,5-triphosphate + H2O = 1D-myo-inositol 2,5-bisphosphate + phosphate. It catalyses the reaction 1D-myo-inositol 2,5-bisphosphate + H2O = 1D-myo-inositol 2-phosphate + phosphate. It carries out the reaction GTP + H2O = GDP + phosphate + H(+). With respect to regulation, contains three consecutive and one non-consecutive disulfide bonds and shows a strong dependence on DsbC for its full activity. Competitively inhibited by tartaric acid and by sodium fluorid. Its function is as follows. Catalyzes the hydrolysis of phytate (or myo-inositol hexakisphosphate, an indigestible organic form of phosphorus that is found in many plant tissues) to myo-inositol and inorganic phosphate. Dephosphorylates phytate in a stereospecific way by sequential removal of phosphate groups to produce myo-inositol 2-monophosphate. Also shows phosphoanhydride phosphatase activity and hydrolyzes the distal phosphoryl residues of GTP, the 5'-beta-phosphoryl residue of the regulatory nucleotide ppGpp and tripolyphosphates. Does not split most phosphomonoesters with the exception of the synthetic substrate p-nitrophenyl phosphate (pNPP), 2,3-bisphosphoglycerate and fructose 1,6-bisphosphate. The chain is Phytase AppA from Escherichia coli (strain K12).